The sequence spans 119 residues: Membrane-anchored ubiquitin-fold protein 3 (119 aa).

Residues isoleucine 8 to valine 76 enclose the Ubiquitin-like domain. Cysteine 116 is subject to Cysteine methyl ester. Cysteine 116 carries the S-geranylgeranyl cysteine lipid modification. A propeptide spans threonine 117–leucine 119 (removed in mature form).

Its subcellular location is the cell membrane. Its function is as follows. May serve as docking site to facilitate the association of other proteins to the plasma membrane. The protein is Membrane-anchored ubiquitin-fold protein 3 (MUB3) of Oryza sativa subsp. japonica (Rice).